The chain runs to 515 residues: Fatty acyl-CoA reductase 2 (515 aa).

Residues 1–464 (MSMIAAFYSN…KAKQHLRRLR (464 aa)) are Cytoplasmic-facing. A helical membrane pass occupies residues 465–484 (NIHYLFNTALFLIIWRLLIA). Over 485 to 515 (RSQMARNVWFFIVSFCYKFISYFRASSTLKV) the chain is Peroxisomal.

It belongs to the fatty acyl-CoA reductase family. Specifically expressed in the meibomian glands of the eyelid and the sebaceous glands of the skin. Also expressed in the brain where large quantities of ether lipids are synthesized.

Its subcellular location is the peroxisome membrane. It carries out the reaction a long-chain fatty acyl-CoA + 2 NADPH + 2 H(+) = a long-chain primary fatty alcohol + 2 NADP(+) + CoA. The enzyme catalyses hexadecanoyl-CoA + 2 NADPH + 2 H(+) = hexadecan-1-ol + 2 NADP(+) + CoA. The catalysed reaction is octadecanoyl-CoA + 2 NADPH + 2 H(+) = octadecan-1-ol + 2 NADP(+) + CoA. It catalyses the reaction a very long-chain fatty acyl-CoA + 2 NADPH + 2 H(+) = a very long-chain primary fatty alcohol + 2 NADP(+) + CoA. It carries out the reaction an ultra-long-chain fatty acyl-CoA + 2 NADPH + 2 H(+) = an ultra long-chain primary fatty alcohol + 2 NADP(+) + CoA. The enzyme catalyses eicosanoyl-CoA + 2 NADPH + 2 H(+) = eicosan-1-ol + 2 NADP(+) + CoA. The catalysed reaction is docosanoyl-CoA + 2 NADPH + 2 H(+) = docosan-1-ol + 2 NADP(+) + CoA. It catalyses the reaction tetracosanoyl-CoA + 2 NADPH + 2 H(+) = tetracosan-1-ol + 2 NADP(+) + CoA. It carries out the reaction hexacosanoyl-CoA + 2 NADPH + 2 H(+) = hexacosan-1-ol + 2 NADP(+) + CoA. The enzyme catalyses octacosanoyl-CoA + 2 NADPH + 2 H(+) = octacosan-1-ol + 2 NADP(+) + CoA. The catalysed reaction is triacontanoyl-CoA + 2 NADPH + 2 H(+) = triacontan-1-ol + 2 NADP(+) + CoA. It catalyses the reaction 18-methylnonadecanoyl-CoA + 2 NADPH + 2 H(+) = 18-methylnonadecan-1-ol + 2 NADP(+) + CoA. It carries out the reaction 20-methylheneicosanoyl-CoA + 2 NADPH + 2 H(+) = 20-methylheneicosan-1-ol + 2 NADP(+) + CoA. The enzyme catalyses 22-methyltricosanoyl-CoA + 2 NADPH + 2 H(+) = 22-methyltricosan-1-ol + 2 NADP(+) + CoA. The catalysed reaction is 24-methylpentacosanoyl-CoA + 2 NADPH + 2 H(+) = 24-methylpentacosan-1-ol + 2 NADP(+) + CoA. Its function is as follows. Catalyzes the reduction of saturated but not unsaturated C16 or C18 fatty acyl-CoA to fatty alcohols. A lower activity can be observed with shorter fatty acyl-CoA substrates. Can produce very long-chain and ultra long-chain FAls, regardless of whether they have a straight or branched chain. It may play a role in the production of ether lipids/plasmalogens and wax monoesters which synthesis requires fatty alcohols as substrates. The chain is Fatty acyl-CoA reductase 2 from Mus musculus (Mouse).